The primary structure comprises 54 residues: uncharacterized protein (54 aa).

This is an uncharacterized protein from Saccharomyces cerevisiae (strain ATCC 204508 / S288c) (Baker's yeast).